A 281-amino-acid chain; its full sequence is Diaminopimelate epimerase (281 aa).

Residues N13, Q51, and N70 each coordinate substrate. C79 functions as the Proton donor in the catalytic mechanism. Residues G80 to N81, N163, N196, and E214 to R215 each bind substrate. The Proton acceptor role is filled by C223. G224–S225 serves as a coordination point for substrate.

Belongs to the diaminopimelate epimerase family. In terms of assembly, homodimer.

The protein localises to the cytoplasm. It carries out the reaction (2S,6S)-2,6-diaminopimelate = meso-2,6-diaminopimelate. It functions in the pathway amino-acid biosynthesis; L-lysine biosynthesis via DAP pathway; DL-2,6-diaminopimelate from LL-2,6-diaminopimelate: step 1/1. Catalyzes the stereoinversion of LL-2,6-diaminopimelate (L,L-DAP) to meso-diaminopimelate (meso-DAP), a precursor of L-lysine and an essential component of the bacterial peptidoglycan. This is Diaminopimelate epimerase from Alcanivorax borkumensis (strain ATCC 700651 / DSM 11573 / NCIMB 13689 / SK2).